A 197-amino-acid polypeptide reads, in one-letter code: Nucleoid occlusion factor SlmA (197 aa).

Residues 6 to 66 form the HTH tetR-type domain; sequence NDRRTQILQA…GLIEFIEESL (61 aa). The H-T-H motif DNA-binding region spans 29–48; the sequence is TTAALAKQVGVSEAALYRHF.

This sequence belongs to the nucleoid occlusion factor SlmA family. As to quaternary structure, homodimer. Interacts with FtsZ.

It localises to the cytoplasm. It is found in the nucleoid. In terms of biological role, required for nucleoid occlusion (NO) phenomenon, which prevents Z-ring formation and cell division over the nucleoid. Acts as a DNA-associated cell division inhibitor that binds simultaneously chromosomal DNA and FtsZ, and disrupts the assembly of FtsZ polymers. SlmA-DNA-binding sequences (SBS) are dispersed on non-Ter regions of the chromosome, preventing FtsZ polymerization at these regions. The protein is Nucleoid occlusion factor SlmA of Marinomonas sp. (strain MWYL1).